A 327-amino-acid polypeptide reads, in one-letter code: MSENTRKVTVAVIGSGNIGTDLMIKVIRHSDVLQMGAMVGIDPDSDGLARARRLGVPTTAVGVHGLLELPNFDEIDVVFDATSAKAHAANAALLEPLGKRLIDLTPAALGPFVVPAVNLDEHRHAANVNMVTCGGQATIPIVAAVSRVTPVAYAEIVASIASKSAGPGTRANIDEFTETTSHAIETVGGARRGKAIIVLNPADPPLIMRDTVLCLISARDPATHDAIRNSIQAMVEHVATYVPGYRLKQQVQITPVPDGQPVHTLLASGDTAAPTHQVSVFLEVEGAAHYLPAYAGNLDIMTSAAVRYAESVADTIAAPAATQGATR.

Residue 15 to 18 coordinates NAD(+); sequence SGNI. The active-site Acyl-thioester intermediate is cysteine 133. NAD(+) is bound by residues 164–172 and asparagine 297; that span reads SAGPGTRAN.

The protein belongs to the acetaldehyde dehydrogenase family.

It carries out the reaction acetaldehyde + NAD(+) + CoA = acetyl-CoA + NADH + H(+). This chain is Acetaldehyde dehydrogenase 6, found in Rhodococcus opacus (strain B4).